Here is a 248-residue protein sequence, read N- to C-terminus: 23S rRNA (guanosine-2'-O-)-methyltransferase RlmB (248 aa).

G200, I220, and L229 together coordinate S-adenosyl-L-methionine.

The protein belongs to the class IV-like SAM-binding methyltransferase superfamily. RNA methyltransferase TrmH family. RlmB subfamily.

It is found in the cytoplasm. The catalysed reaction is guanosine(2251) in 23S rRNA + S-adenosyl-L-methionine = 2'-O-methylguanosine(2251) in 23S rRNA + S-adenosyl-L-homocysteine + H(+). In terms of biological role, specifically methylates the ribose of guanosine 2251 in 23S rRNA. This chain is 23S rRNA (guanosine-2'-O-)-methyltransferase RlmB, found in Acinetobacter baylyi (strain ATCC 33305 / BD413 / ADP1).